An 842-amino-acid chain; its full sequence is Homeobox-leucine zipper protein REVOLUTA (842 aa).

The segment at 1-20 (MEMAVANHRERSSDSMNRHL) is disordered. Positions 7–20 (NHRERSSDSMNRHL) are enriched in basic and acidic residues. Positions 22–85 (SSGKYVRYTA…NRRCRDKQRK (64 aa)) form a DNA-binding region, homeobox. Residues 90–121 (LQSVNRKLSAMNKLLMEENDRLQKQVSQLVCE) are a coiled coil. The 229-residue stretch at 151–379 (DANSPAGLLS…LAQESNGEVV (229 aa)) folds into the START domain.

It belongs to the HD-ZIP homeobox family. Class III subfamily. As to quaternary structure, homodimer. Heterodimer with ZPR1, ZPR2, ZPR3 or ZPR4. Interacts with ESR1 and ESR2. Interacts with ZPR1, ZPR2, ZPR3 and ZPR4. Heterodimerization with ZPR3 prevents DNA binding by REV. As to expression, expressed in the interfascicular regions of stem and vascular bundles of young roots and leaves.

It localises to the nucleus. Probable transcription factor involved in the regulation of interfascicular fiber (cortical cells) and secondary xylem differentiation in the inflorescence stems. Required for lateral shoot meristems (LSMs) and flower meristems (FMs) initiation. May be involved in the determination of vascular patterning and organ polarity. Directly regulates the expression of AGO10, ZPR1, ZPR2, ZPR3 and ZPR4. Required to regulate adaxial-abaxial polarity and leaf axial patterning. The sequence is that of Homeobox-leucine zipper protein REVOLUTA from Arabidopsis thaliana (Mouse-ear cress).